A 446-amino-acid polypeptide reads, in one-letter code: Endoplasmic reticulum membrane adapter protein XK (446 aa).

The Cytoplasmic segment spans residues 1–2 (MK). A helical membrane pass occupies residues 3-23 (FPASVIASVFLFVAETAAALY). Over 24–37 (LSSTYRSAGDRMWQ) the chain is Extracellular. The chain crosses the membrane as a helical span at residues 38–58 (VLTLLFSLMPCALVQFTLLFV). Topologically, residues 59–68 (HRDLSRDRPL) are cytoplasmic. Residues 69–89 (ALLMHLLQLGPLYRCCEVFCI) traverse the membrane as a helical segment. At 90-140 (YCQSDQNEEPYVSITKKRQMPKDGLSEEVEKEVGQAEGKLITHRSAFSRAS) the chain is on the extracellular side. Serine 115 carries the phosphoserine modification. Residues 141 to 161 (VIQAFLGSAPQLTLQLYITVL) traverse the membrane as a helical segment. The Cytoplasmic portion of the chain corresponds to 162-171 (EQNITTGRCF). The chain crosses the membrane as a helical span at residues 172-192 (IMTLSLLSIVYGALRCNILAI). Residues 193–208 (KIKYDEYEVKVKPLAY) lie on the Extracellular side of the membrane. A helical transmembrane segment spans residues 209–229 (VCIFLWRSFEIATRVIVLVLF). Topologically, residues 230-235 (TSVLKI) are cytoplasmic. A helical transmembrane segment spans residues 236-256 (WVVAVILVNFFSFFLYPWIVF). The Extracellular portion of the chain corresponds to 257–277 (WCSGSPFPENIEKALSRVGTT). A helical transmembrane segment spans residues 278–298 (IVLCFLTLLYAGINMFCWSAV). The Cytoplasmic portion of the chain corresponds to 299–317 (QLKIDNPELISKSQNWYRL). A helical transmembrane segment spans residues 318–338 (LIYYMTRFIENSVLLLLWYFF). At 339 to 349 (KTDIYMYVCAP) the chain is on the extracellular side. Residues 350 to 370 (LLILQLLIGYCTGILFMLVFY) form a helical membrane-spanning segment. Topologically, residues 371-446 (QFFHPCKKLF…IWTAVDLCSA (76 aa)) are cytoplasmic.

It belongs to the XK family. In terms of assembly, heterodimer with Kell; disulfide-linked. Interacts with VPS13A.

It is found in the endoplasmic reticulum membrane. Recruits the lipid transfer protein VPS13A from lipid droplets to the endoplasmic reticulum (ER) membrane. The polypeptide is Endoplasmic reticulum membrane adapter protein XK (Mus musculus (Mouse)).